Consider the following 779-residue polypeptide: Pre-mRNA-splicing factor cef-1 (779 aa).

HTH myb-type domains lie at 1–56 (MPVV…DPSI) and 57–106 (KKIE…DEAE). DNA-binding regions (H-T-H motif) lie at residues 29 to 52 (WARV…NEWL) and 80 to 102 (WRTI…QRLL). 4 disordered regions span residues 113-192 (LGLT…ESRR), 246-284 (EYQR…PSVQ), 424-448 (TPLR…LRTP), and 497-525 (WELE…DRRE). Over residues 127–152 (SADDVRKLRPGEVDPDPETKPARPDT) the composition is skewed to basic and acidic residues. The stretch at 157-204 (EDEKEMLSEARARLANTQGKKAKRKARERQQEESRRLAALQKRRELKT) forms a coiled coil. Composition is skewed to basic and acidic residues over residues 246-256 (EYQRAHFDPKK) and 263-281 (RKGE…DKDP). Residues 653-772 (DEEEEQISTM…EELDALTLNG (120 aa)) are a coiled coil.

It belongs to the CEF1 family. In terms of assembly, associated with the spliceosome.

The protein localises to the cytoplasm. It localises to the nucleus. Its function is as follows. Involved in pre-mRNA splicing and cell cycle control. This is Pre-mRNA-splicing factor cef-1 (cef-1) from Neurospora crassa (strain ATCC 24698 / 74-OR23-1A / CBS 708.71 / DSM 1257 / FGSC 987).